We begin with the raw amino-acid sequence, 251 residues long: V-set and transmembrane domain-containing protein 2B (251 aa).

Residues 1-25 (MEKQGLFSALCYLMLNTPLLFSVNA) form the signal peptide. Residues 26 to 142 (TFTEVPKDVT…DETQEHKAQA (117 aa)) enclose the Ig-like V-type domain. Residues 26–226 (TFTEVPKDVT…RQQHGSGTGP (201 aa)) are Extracellular-facing. Cysteine 46 and cysteine 125 form a disulfide bridge. The tract at residues 157-213 (AAEAVSHIQSSGPRRNNPSSRATPEPGNKRAVPPAENLAPSLSTAASSSASPAPGKA) is disordered. Low complexity-rich tracts occupy residues 166 to 177 (SSGPRRNNPSSR) and 195 to 213 (APSL…PGKA). Residues 227–247 (IFANDPALYMFLLIFHQLVYL) traverse the membrane as a helical segment. Residues 248 to 251 (LLNH) lie on the Cytoplasmic side of the membrane.

The protein resides in the membrane. The protein is V-set and transmembrane domain-containing protein 2B (vstm2b) of Xenopus tropicalis (Western clawed frog).